Reading from the N-terminus, the 209-residue chain is Thiamine-phosphate synthase (209 aa).

Residues Q41–K45 and N73 each bind 4-amino-2-methyl-5-(diphosphooxymethyl)pyrimidine. Residues D74 and D93 each contribute to the Mg(2+) site. S112 is a binding site for 4-amino-2-methyl-5-(diphosphooxymethyl)pyrimidine. T138–T140 contacts 2-[(2R,5Z)-2-carboxy-4-methylthiazol-5(2H)-ylidene]ethyl phosphate. 4-amino-2-methyl-5-(diphosphooxymethyl)pyrimidine is bound at residue K141. 2-[(2R,5Z)-2-carboxy-4-methylthiazol-5(2H)-ylidene]ethyl phosphate is bound by residues G168 and V188 to S189.

It belongs to the thiamine-phosphate synthase family. Mg(2+) is required as a cofactor.

It carries out the reaction 2-[(2R,5Z)-2-carboxy-4-methylthiazol-5(2H)-ylidene]ethyl phosphate + 4-amino-2-methyl-5-(diphosphooxymethyl)pyrimidine + 2 H(+) = thiamine phosphate + CO2 + diphosphate. The catalysed reaction is 2-(2-carboxy-4-methylthiazol-5-yl)ethyl phosphate + 4-amino-2-methyl-5-(diphosphooxymethyl)pyrimidine + 2 H(+) = thiamine phosphate + CO2 + diphosphate. The enzyme catalyses 4-methyl-5-(2-phosphooxyethyl)-thiazole + 4-amino-2-methyl-5-(diphosphooxymethyl)pyrimidine + H(+) = thiamine phosphate + diphosphate. It participates in cofactor biosynthesis; thiamine diphosphate biosynthesis; thiamine phosphate from 4-amino-2-methyl-5-diphosphomethylpyrimidine and 4-methyl-5-(2-phosphoethyl)-thiazole: step 1/1. Functionally, condenses 4-methyl-5-(beta-hydroxyethyl)thiazole monophosphate (THZ-P) and 2-methyl-4-amino-5-hydroxymethyl pyrimidine pyrophosphate (HMP-PP) to form thiamine monophosphate (TMP). The polypeptide is Thiamine-phosphate synthase (Alkaliphilus oremlandii (strain OhILAs) (Clostridium oremlandii (strain OhILAs))).